The following is a 215-amino-acid chain: 3-isopropylmalate dehydratase small subunit (215 aa).

This sequence belongs to the LeuD family. LeuD type 1 subfamily. Heterodimer of LeuC and LeuD.

It catalyses the reaction (2R,3S)-3-isopropylmalate = (2S)-2-isopropylmalate. Its pathway is amino-acid biosynthesis; L-leucine biosynthesis; L-leucine from 3-methyl-2-oxobutanoate: step 2/4. Its function is as follows. Catalyzes the isomerization between 2-isopropylmalate and 3-isopropylmalate, via the formation of 2-isopropylmaleate. This Stutzerimonas stutzeri (strain A1501) (Pseudomonas stutzeri) protein is 3-isopropylmalate dehydratase small subunit.